The chain runs to 419 residues: Zinc finger protein Pegasus (419 aa).

Lys5 participates in a covalent cross-link: Glycyl lysine isopeptide (Lys-Gly) (interchain with G-Cter in SUMO2). C2H2-type zinc fingers lie at residues 82–104 (LKCR…IRIH), 110–132 (HRCH…MRSH), and 138–161 (YKCE…RRKH). A Glycyl lysine isopeptide (Lys-Gly) (interchain with G-Cter in SUMO2) cross-link involves residue Lys185. Residues 223–236 (QTDSYESMAKTTPT) show a composition bias toward polar residues. 2 disordered regions span residues 223 to 245 (QTDS…DPQE) and 288 to 356 (MQQP…PTLP). Residues 289–311 (QQPSAQAVVSAVSASLPQSSSPA) are compositionally biased toward low complexity. Positions 332–349 (SEPSAHTSTPSMGNSQPS) are enriched in polar residues. 2 C2H2-type zinc fingers span residues 364–386 (HHCQ…MGCH) and 392–416 (FQCN…RGQH).

The protein belongs to the Ikaros C2H2-type zinc-finger protein family. In terms of assembly, self-associates. Interacts with other family members; IKZF1, IKZF2, IKZF3 and IKZF4.

The protein resides in the nucleus. Its function is as follows. Transcriptional repressor that binds the core 5'GNNTGTNG-3' DNA consensus sequence. Involved in megakaryocyte differentiation. The sequence is that of Zinc finger protein Pegasus (IKZF5) from Bos taurus (Bovine).